The chain runs to 746 residues: tRNA (cytosine(34)-C(5))-methyltransferase (746 aa).

The segment at 1 to 30 is disordered; that stretch reads MGRNQKQNFFAARKRQKRENGPKRTDRQAQ. Basic and acidic residues predominate over residues 18–30; the sequence is RENGPKRTDRQAQ. Residues 184-190, Asp216, Asp243, and Asp270 contribute to the S-adenosyl-L-methionine site; that span reads CAAPGSK. Catalysis depends on Cys323, which acts as the Nucleophile. Disordered regions lie at residues 454–475 and 701–746; these read QPAA…SVPW and SAEA…VATS. Basic and acidic residues predominate over residues 463-472; sequence ADGKPIEEKS. Acidic residues predominate over residues 704–714; it reads AEADSSGDGDA. Residues 731–746 are compositionally biased toward polar residues; sequence AETTGTPMDTEVVATS.

The protein belongs to the class I-like SAM-binding methyltransferase superfamily. RsmB/NOP family. TRM4 subfamily. Ubiquitously expressed during embryonic development. Some enrichment is observed in the proventriculus area of the foregut and in the hindgut.

It localises to the nucleus. The protein localises to the nucleolus. The enzyme catalyses cytidine(34) in tRNA precursor + S-adenosyl-L-methionine = 5-methylcytidine(34) in tRNA precursor + S-adenosyl-L-homocysteine + H(+). Functionally, RNA methyltransferase that methylates tRNAs. Methylates cytosine to 5-methylcytosine (m5C) at position 34 of intron-containing tRNA(Leu)(CAA) precursors. Required for short-term memory. This chain is tRNA (cytosine(34)-C(5))-methyltransferase, found in Drosophila melanogaster (Fruit fly).